A 353-amino-acid polypeptide reads, in one-letter code: MNLVVLQNWLDNASFAILFLTMLVYWGGAAFPNLPYLAALGTAGMAIANLCMATLLGARWIEAGYFPLSNLYESLFFLTWGITTVHLIAESSSRSRLVGVVTAPVAMLIAAFATMTLPSQMQASEPLVPALKSNWLMMHVSVMMLSYSALMVGALLAIAFLIVTRGQNIQLQGSSVGTGGYRSNGYRLHKAAELISQPPAPSAENNGFARFESSSNGNGNANTAVLNLVTTSEPQTVASAEPLSPQRLSLAETLDNISYRIIGLGFPLLTIGIIAGGVWANEAWGSYWSWDPKETWALITWLVFAAYLHARITRGWQGRRPAILAATGFVVVWICYLGVNLLGKGLHSYGWFF.

8 helical membrane passes run 15 to 35, 37 to 57, 68 to 88, 97 to 117, 142 to 162, 261 to 281, 288 to 308, and 322 to 342; these read FAIL…PNLP, LAAL…TLLG, LSNL…VHLI, LVGV…TMTL, VMML…AFLI, IIGL…VWAN, WSWD…AAYL, and AILA…VNLL.

It belongs to the CcmF/CycK/Ccl1/NrfE/CcsA family. As to quaternary structure, may interact with ccs1.

It is found in the cellular thylakoid membrane. In terms of biological role, required during biogenesis of c-type cytochromes (cytochrome c6 and cytochrome f) at the step of heme attachment. The chain is Cytochrome c biogenesis protein CcsA from Nostoc punctiforme (strain ATCC 29133 / PCC 73102).